We begin with the raw amino-acid sequence, 681 residues long: Proline dehydrogenase 1, mitochondrial (681 aa).

The transit peptide at 1-30 (MALLRSLSAQRTAISLVYGRNSSKSSNSVA) directs the protein to the mitochondrion. Residues 76-87 (STLVQPEVVSSE) show a composition bias toward polar residues. Disordered stretches follow at residues 76–113 (STLV…QRDP) and 216–239 (EEAE…EGSM). Residues 88-99 (TVKRSMKQESSQ) show a composition bias toward basic and acidic residues.

The protein belongs to the proline oxidase family. FAD is required as a cofactor. In terms of tissue distribution, most abundant in developing nervous system.

The protein resides in the mitochondrion matrix. The catalysed reaction is L-proline + a quinone = (S)-1-pyrroline-5-carboxylate + a quinol + H(+). It functions in the pathway amino-acid degradation; L-proline degradation into L-glutamate; L-glutamate from L-proline: step 1/2. Functionally, converts proline to delta-1-pyrroline-5-carboxylate. Involved in the conversion of proline to glutamate, which functions as a transmitter at neuromuscular junctions. Glutamate deficiency could possibly account for reduced motor activity. This Drosophila melanogaster (Fruit fly) protein is Proline dehydrogenase 1, mitochondrial (slgA).